The primary structure comprises 120 residues: Large ribosomal subunit protein uL18 (120 aa).

This sequence belongs to the universal ribosomal protein uL18 family. In terms of assembly, part of the 50S ribosomal subunit; part of the 5S rRNA/L5/L18/L25 subcomplex. Contacts the 5S and 23S rRNAs.

In terms of biological role, this is one of the proteins that bind and probably mediate the attachment of the 5S RNA into the large ribosomal subunit, where it forms part of the central protuberance. The protein is Large ribosomal subunit protein uL18 of Synechococcus elongatus (strain ATCC 33912 / PCC 7942 / FACHB-805) (Anacystis nidulans R2).